Here is a 234-residue protein sequence, read N- to C-terminus: C2H2-type zinc-finger transcription factor clz7 (234 aa).

2 disordered regions span residues 45-99 (RPEG…SRVD) and 118-154 (SAQP…NGTA). Low complexity-rich tracts occupy residues 66 to 77 (SQSSNTSPTSES) and 140 to 154 (SSGT…NGTA). The segment at 159–184 (NRCWDHGCNGKKFLNHSNLVRHRREN) adopts a C2H2-type 1; degenerate zinc-finger fold. The segment at 191–223 (FICPMCGAYFSRSTARNQHLEKKSCNRVRRYSN) adopts a C2H2-type 2; degenerate zinc-finger fold.

Belongs to the GLI C2H2-type zinc-finger protein family.

It is found in the nucleus. In terms of biological role, transcription factor that probably regulates the expression of the gene cluster that mediates the biosynthesis of squalestatin S1 (SQS1, also known as zaragozic acid A), a heavily oxidized fungal polyketide that offers potent cholesterol lowering activity by targeting squalene synthase (SS). The sequence is that of C2H2-type zinc-finger transcription factor clz7 from Cochliobolus lunatus (Filamentous fungus).